We begin with the raw amino-acid sequence, 862 residues long: Valine--tRNA ligase (862 aa).

The 'HIGH' region motif lies at 47–57 (PTASGSLHIGH). Residues 110-130 (EPGLTPPFEGGDNKSSKAADQ) form a disordered region. The segment covering 120–129 (GDNKSSKAAD) has biased composition (basic and acidic residues). Residues 584 to 588 (KMSKS) carry the 'KMSKS' region motif. Residue K587 coordinates ATP.

This sequence belongs to the class-I aminoacyl-tRNA synthetase family. ValS type 2 subfamily. Monomer.

The protein localises to the cytoplasm. It catalyses the reaction tRNA(Val) + L-valine + ATP = L-valyl-tRNA(Val) + AMP + diphosphate. Its function is as follows. Catalyzes the attachment of valine to tRNA(Val). As ValRS can inadvertently accommodate and process structurally similar amino acids such as threonine, to avoid such errors, it has a 'posttransfer' editing activity that hydrolyzes mischarged Thr-tRNA(Val) in a tRNA-dependent manner. The sequence is that of Valine--tRNA ligase from Leifsonia xyli subsp. xyli (strain CTCB07).